Consider the following 424-residue polypeptide: UDP-N-acetylglucosamine 1-carboxyvinyltransferase (424 aa).

22 to 23 contacts phosphoenolpyruvate; sequence KN. Arg-93 serves as a coordination point for UDP-N-acetyl-alpha-D-glucosamine. Residue Cys-117 is the Proton donor of the active site. Cys-117 bears the 2-(S-cysteinyl)pyruvic acid O-phosphothioketal mark. UDP-N-acetyl-alpha-D-glucosamine is bound by residues 122–126, 162–165, Asp-307, and Ile-329; these read RPVDL and KVSV.

This sequence belongs to the EPSP synthase family. MurA subfamily.

It localises to the cytoplasm. It carries out the reaction phosphoenolpyruvate + UDP-N-acetyl-alpha-D-glucosamine = UDP-N-acetyl-3-O-(1-carboxyvinyl)-alpha-D-glucosamine + phosphate. The protein operates within cell wall biogenesis; peptidoglycan biosynthesis. Cell wall formation. Adds enolpyruvyl to UDP-N-acetylglucosamine. This chain is UDP-N-acetylglucosamine 1-carboxyvinyltransferase, found in Haemophilus influenzae (strain PittEE).